Here is a 217-residue protein sequence, read N- to C-terminus: Growth hormone variant (217 aa).

An N-terminal signal peptide occupies residues 1–26 (MAAGSRTSLLLAFGLLCLPWLQEGSA). Intrachain disulfides connect Cys-79–Cys-191 and Cys-208–Cys-215. Ser-132 is subject to Phosphoserine. Asn-166 carries N-linked (GlcNAc...) asparagine glycosylation. Ser-176 bears the Phosphoserine mark.

This sequence belongs to the somatotropin/prolactin family. As to expression, expressed in the placenta.

The protein resides in the secreted. Functionally, plays an important role in growth control. Its major role in stimulating body growth is to stimulate the liver and other tissues to secrete IGF1. It stimulates both the differentiation and proliferation of myoblasts. It also stimulates amino acid uptake and protein synthesis in muscle and other tissues. This chain is Growth hormone variant (GH2), found in Pan troglodytes (Chimpanzee).